Reading from the N-terminus, the 436-residue chain is MSTINNPLNIKTRSHSSMGGGMIMDENKVPKSSIGMDKKIGGTTGLKSHRGALSDLTNNTHQTTGMATKTVQLSNNNIIMPQPTNTRNNIITRSKSIIDNGASLRNSALISGVLPNANGPVNKVQKRDIQSMEMMNNIPQQPVMIDDVDNDTNMIQEEQMVIDITEVPENIDIYDSHDPQCVGEYVNEIFAYYREKEQIDKIDKDYIKNQYHINERMRAILVDWMMAVHVRFKLLSETFFLSVNIVDRYLAKVMIPVTKLQLVGITAILLACKYEEIYSPQIKDFVHTSDDACTHAEVIDMERQILSTLQFHMSVATPLHFLRRFSKAAGSDSRTHSLSKYLSELSMVEYRMVQFVPSMIAAASIYVARRMTMKSGPYWNVTLEYYTCYKESEILQCAQELKEVRKRADTSNLKATRKKYLSSKLMEVAAIPVVEF.

The segment covering 1–17 (MSTINNPLNIKTRSHSS) has biased composition (polar residues). Positions 1-33 (MSTINNPLNIKTRSHSSMGGGMIMDENKVPKSS) are disordered.

This sequence belongs to the cyclin family. Cyclin AB subfamily. In terms of assembly, interacts with the cdk1 protein kinase to form a serine/threonine kinase holoenzyme complex also known as maturation promoting factor (MPF). The cyclin subunit imparts substrate specificity to the complex.

Essential for the control of the cell cycle at the G2/M (mitosis) transition. This chain is G2/mitotic-specific cyclin-B (cycB), found in Dictyostelium discoideum (Social amoeba).